Consider the following 249-residue polypeptide: ATP synthase subunit a, chloroplastic (249 aa).

5 helical membrane-spanning segments follow: residues 40–60 (QVLI…VLAI), 97–117 (VPFI…GALL), 136–156 (INTT…AGLS), 201–221 (LVVV…VMFL), and 222–242 (GLFT…AYIG).

This sequence belongs to the ATPase A chain family. In terms of assembly, F-type ATPases have 2 components, CF(1) - the catalytic core - and CF(0) - the membrane proton channel. CF(1) has five subunits: alpha(3), beta(3), gamma(1), delta(1), epsilon(1). CF(0) has four main subunits: a, b, b' and c.

Its subcellular location is the plastid. It is found in the chloroplast thylakoid membrane. Key component of the proton channel; it plays a direct role in the translocation of protons across the membrane. The protein is ATP synthase subunit a, chloroplastic of Nasturtium officinale (Watercress).